Here is a 310-residue protein sequence, read N- to C-terminus: Glutamyl-Q tRNA(Asp) synthetase (310 aa).

Residues 8–12 (RFAPS) and glutamate 44 contribute to the L-glutamate site. Residues 11–21 (PSPTGPLHLGS) carry the 'HIGH' region motif. Cysteine 100, cysteine 102, tyrosine 123, and cysteine 127 together coordinate Zn(2+). L-glutamate contacts are provided by tyrosine 183 and arginine 201. The 'KMSKS' region signature appears at 239-243 (KLSKQ). Lysine 242 contacts ATP.

The protein belongs to the class-I aminoacyl-tRNA synthetase family. GluQ subfamily. Zn(2+) serves as cofactor.

Catalyzes the tRNA-independent activation of glutamate in presence of ATP and the subsequent transfer of glutamate onto a tRNA(Asp). Glutamate is transferred on the 2-amino-5-(4,5-dihydroxy-2-cyclopenten-1-yl) moiety of the queuosine in the wobble position of the QUC anticodon. The polypeptide is Glutamyl-Q tRNA(Asp) synthetase (Cupriavidus metallidurans (strain ATCC 43123 / DSM 2839 / NBRC 102507 / CH34) (Ralstonia metallidurans)).